The primary structure comprises 119 residues: Large ribosomal subunit protein bL12 (119 aa).

This sequence belongs to the bacterial ribosomal protein bL12 family. In terms of assembly, homodimer. Part of the ribosomal stalk of the 50S ribosomal subunit. Forms a multimeric L10(L12)X complex, where L10 forms an elongated spine to which 2 to 4 L12 dimers bind in a sequential fashion. Binds GTP-bound translation factors.

Its function is as follows. Forms part of the ribosomal stalk which helps the ribosome interact with GTP-bound translation factors. Is thus essential for accurate translation. This chain is Large ribosomal subunit protein bL12, found in Lysinibacillus sphaericus (strain C3-41).